We begin with the raw amino-acid sequence, 475 residues long: Ribulose bisphosphate carboxylase large chain (475 aa).

The propeptide occupies 1 to 2 (MS). The residue at position 3 (P3) is an N-acetylproline. K14 is subject to N6,N6,N6-trimethyllysine. 2 residues coordinate substrate: N123 and T173. K175 functions as the Proton acceptor in the catalytic mechanism. A substrate-binding site is contributed by K177. The Mg(2+) site is built by K201, D203, and E204. K201 is modified (N6-carboxylysine). H294 serves as the catalytic Proton acceptor. The substrate site is built by R295, H327, and S379.

Belongs to the RuBisCO large chain family. Type I subfamily. In terms of assembly, heterohexadecamer of 8 large chains and 8 small chains; disulfide-linked. The disulfide link is formed within the large subunit homodimers. The cofactor is Mg(2+). Post-translationally, the disulfide bond which can form in the large chain dimeric partners within the hexadecamer appears to be associated with oxidative stress and protein turnover.

It is found in the plastid. It localises to the chloroplast. It catalyses the reaction 2 (2R)-3-phosphoglycerate + 2 H(+) = D-ribulose 1,5-bisphosphate + CO2 + H2O. The catalysed reaction is D-ribulose 1,5-bisphosphate + O2 = 2-phosphoglycolate + (2R)-3-phosphoglycerate + 2 H(+). In terms of biological role, ruBisCO catalyzes two reactions: the carboxylation of D-ribulose 1,5-bisphosphate, the primary event in carbon dioxide fixation, as well as the oxidative fragmentation of the pentose substrate in the photorespiration process. Both reactions occur simultaneously and in competition at the same active site. This Carica papaya (Papaya) protein is Ribulose bisphosphate carboxylase large chain.